We begin with the raw amino-acid sequence, 1116 residues long: ELKS/Rab6-interacting/CAST family member 1 (1116 aa).

The interval 1-54 (MYGSARSVGKVEPSSQSPGRSPRLPRSPRLGHRRTNSTGGSSGSSVGGGSGKTL) is disordered. Lys10 carries the N6-acetyllysine modification. Positions 13-28 (PSSQSPGRSPRLPRSP) are enriched in low complexity. 3 positions are modified to phosphoserine: Ser17, Ser21, and Ser37. Residue Thr38 is modified to Phosphothreonine. Positions 40–51 (GSSGSSVGGGSG) are enriched in gly residues. Ser55, Ser75, and Ser94 each carry phosphoserine. A coiled-coil region spans residues 144–988 (RQARDNTIMD…RMKLMADNYE (845 aa)). A compositionally biased stretch (basic and acidic residues) spans 590 to 602 (KEKQMSSLKERVK). 2 disordered regions span residues 590-609 (KEKQ…ADTT) and 814-836 (ARRR…RKKD). Phosphoserine is present on Ser1005. Position 1046 is a phosphothreonine (Thr1046). The FIP-RBD domain occupies 1046-1108 (TPPASYNLDD…DHCPDILEQV (63 aa)). Positions 1060–1100 (WENELQKMTRGQLQDELEKGERDNAELQEFANAILQQIADH) form a coiled coil.

In terms of assembly, part of a complex with CHUK, IKBKB and IKBKG. Interacts with CHUK, IKBKB and IKBKG. The interaction with IKBKG is independent of CHUK and IKBKB. Interacts with NFKBIA. Isoform 4 interacts with PPFIA1, and through its C-terminus with the PDZ domains of RIMS1 and RIMS2. Interacts with ERC2/CAST1. Interacts with the GTB-bound forms of RAB6A isoform 1 and isoform 2 and with RAB6B. The interaction was strongest with RAB6B, followed by RAB6A isoform 2 and weakest with RAB6A isoform 1. Interacts with SDCCAG8. Part of a cortical microtubule stabilization complex (CMSC) composed of KANK1, PPFIA1, PPFIBP1, ERC1/ELKS, PHLDB2/LL5beta, CLASPs, KIF21A and possibly additional interactors; within CMSCs KANK1 and PHLDB2/LL5beta appear to be the core components for targeting of microtubule-binding proteins KIF21A and CLASPs, whereas PPFIA1, PPFIBP1 and ERC1/ELKS serve as scaffolds for protein clustering. In terms of tissue distribution, widely expressed. Isoform 2 and isoform 4 are abundantly expressed in brain. Isoform 1 and isoform 3 are predominantly expressed in testis and thyroid, and isoform 1 predominates in other tissues tested.

The protein localises to the cytoplasm. The protein resides in the cytoskeleton. It is found in the microtubule organizing center. Its subcellular location is the centrosome. It localises to the membrane. The protein localises to the golgi apparatus membrane. The protein resides in the presynaptic cell membrane. It is found in the cell projection. Its subcellular location is the podosome. Functionally, regulatory subunit of the IKK complex. Probably recruits IkappaBalpha/NFKBIA to the complex. May be involved in the organization of the cytomatrix at the nerve terminals active zone (CAZ) which regulates neurotransmitter release. May be involved in vesicle trafficking at the CAZ. May be involved in Rab-6 regulated endosomes to Golgi transport. In Homo sapiens (Human), this protein is ELKS/Rab6-interacting/CAST family member 1 (ERC1).